The primary structure comprises 99 residues: MLEQQRNPADALTVSVLNSQSQVTNKPLRDSVKQALRNYLSQLDGQDVNELYELVLAEVEHPMLDMVMQYTRGNQTRAATMLGINRGTLRKKLKKYGMG.

Positions 75–94 form a DNA-binding region, H-T-H motif; sequence QTRAATMLGINRGTLRKKLK.

This sequence belongs to the transcriptional regulatory Fis family. As to quaternary structure, homodimer.

In terms of biological role, activates ribosomal RNA transcription. Plays a direct role in upstream activation of rRNA promoters. This is DNA-binding protein Fis from Pasteurella multocida (strain Pm70).